We begin with the raw amino-acid sequence, 1205 residues long: Plasma membrane calcium-transporting ATPase 4 (1205 aa).

Over 1–100 the chain is Cytoplasmic; that stretch reads MTNPPGQSVS…KTFLELVWEA (100 aa). The helical transmembrane segment at 101–121 threads the bilayer; that stretch reads LQDVTLIILEIAAIISLVLSF. The Extracellular segment spans residues 122-147; it reads YRPPGGDNEICGHIASSPEEEEEGET. A helical membrane pass occupies residues 148 to 168; the sequence is GWIEGAAILASVIIVVLVTAF. Residues 169-369 are Cytoplasmic-facing; the sequence is NDWSKEKQFR…LAVQIGKAGL (201 aa). A disordered region spans residues 294-318; that stretch reads DDDDKKKKGKKQGAPENRNKAKTQD. Phosphoserine is present on residues serine 329 and serine 335. Residues 370 to 390 traverse the membrane as a helical segment; that stretch reads IMSVLTVVILILYFVVDNFVI. The Extracellular segment spans residues 391–409; that stretch reads QRREWLPECTPVYIQYFVK. The helical transmembrane segment at 410-430 threads the bilayer; it reads FFIIGVTVLVVAVPEGLPLAV. Over 431 to 844 the chain is Cytoplasmic; that stretch reads TISLAYSVKK…RNVYDSISKF (414 aa). Aspartate 466 (4-aspartylphosphate intermediate) is an active-site residue. Residues aspartate 786 and aspartate 790 each coordinate Mg(2+). A helical transmembrane segment spans residues 845–865; sequence LQFQLTVNVVAVIVAFTGACI. Topologically, residues 866–872 are extracellular; the sequence is TQDSPLK. A helical transmembrane segment spans residues 873–893; sequence AVQMLWVNLIMDTFASLALAT. At 894 to 919 the chain is on the cytoplasmic side; the sequence is EPPTESLLRRRPYGRNKPLISRTMMK. A helical membrane pass occupies residues 920-942; sequence NILGHAVYQLLIVFLLVFAGDTL. Residues 943–956 are Extracellular-facing; that stretch reads FDIDSGRKAPLNSP. A helical transmembrane segment spans residues 957 to 979; it reads PSQHYTIVFNTFVLMQLFNEINA. The Cytoplasmic portion of the chain corresponds to 980–995; it reads RKIHGEKNVFAGVYRN. A helical membrane pass occupies residues 996–1016; it reads IIFCTVVLGTFFCQIMIVELG. At 1017 to 1029 the chain is on the extracellular side; that stretch reads GKPFSCTSLTMEQ. Residues 1030–1050 traverse the membrane as a helical segment; sequence WMWCLFIGIGELLWGQVISAI. Residues 1051-1205 lie on the Cytoplasmic side of the membrane; sequence PTKSLKFLKE…SPLPSLETPV (155 aa). Phosphoserine is present on residues serine 1065 and serine 1071. At arginine 1072 the chain carries Omega-N-methylarginine. The segment at 1087-1104 is calmodulin-binding subdomain A; the sequence is LRRGQILWVRGLNRIQTQ. A Phosphothreonine; by PKC modification is found at threonine 1103. Residues 1105–1114 form a calmodulin-binding subdomain B region; sequence IRVVKLFHNN. Serine 1145 is subject to Phosphoserine.

This sequence belongs to the cation transport ATPase (P-type) (TC 3.A.3) family. Type IIB subfamily. As to quaternary structure, interacts with PDZD11. Interacts with SLC35G1 and STIM1. Interacts with calmodulin. As to expression, specifically expressed by sperm in testis (at protein level).

It localises to the membrane. The protein localises to the cell projection. The protein resides in the cilium. Its subcellular location is the flagellum membrane. The catalysed reaction is Ca(2+)(in) + ATP + H2O = Ca(2+)(out) + ADP + phosphate + H(+). Its activity is regulated as follows. Activated by calcium/calmodulin. Calcium/calmodulin-regulated and magnesium-dependent enzyme that catalyzes the hydrolysis of ATP coupled with the transport of calcium out of the cell. By regulating sperm cell calcium homeostasis, may play a role in sperm motility. The protein is Plasma membrane calcium-transporting ATPase 4 of Mus musculus (Mouse).